A 238-amino-acid polypeptide reads, in one-letter code: MLVLFVATWSDLGLCKKRPKPGGWNTGGSRYPGQGSPGGNRYPPQGGGGWGQPHGGGWGQPHGGGWGQPHGGGWGQGGGTHNQWHKPSKPKTSMKHMAGAAAAGAVVGGLGGYMLGSAMSRPLIHFGNDYEDRYYRENMYRYPNQVYYRPVDQYSNQNNFVHDCVNITIKQHTVTTTTKGENFTETDVKMMERVVEQMCITQYEKESQAYYQRGSSMVLFSSPPVILLISFLIFLIVG.

Positions 1–15 are cleaved as a signal peptide; the sequence is MLVLFVATWSDLGLC. Positions 16–215 are interaction with GRB2, ERI3 and SYN1; sequence KKRPKPGGWN…ESQAYYQRGS (200 aa). Residues 18–93 form a disordered region; that stretch reads RPKPGGWNTG…WHKPSKPKTS (76 aa). 4 repeat units span residues 44–52, 53–60, 61–68, and 69–76. The tract at residues 44–76 is 4 X 8 AA tandem repeats of P-H-G-G-G-W-G-Q; it reads PQGGGGWGQPHGGGWGQPHGGGWGQPHGGGWGQ. The segment covering 45-80 has biased composition (gly residues); it reads QGGGGWGQPHGGGWGQPHGGGWGQPHGGGWGQGGGT. Cu(2+) is bound by residues G47, G48, H54, G55, G56, H62, G63, G64, H70, G71, and G72. Basic residues predominate over residues 83–93; sequence QWHKPSKPKTS. A disulfide bond links C164 and C199. N-linked (GlcNAc...) asparagine glycosylation is found at N166 and N182. S215 carries GPI-anchor amidated serine lipidation. A propeptide spans 216 to 238 (removed in mature form); it reads SMVLFSSPPVILLISFLIFLIVG.

Belongs to the prion family. In terms of assembly, monomer and homodimer. Has a tendency to aggregate into amyloid fibrils containing a cross-beta spine, formed by a steric zipper of superposed beta-strands. Soluble oligomers may represent an intermediate stage on the path to fibril formation. Copper binding may promote oligomerization. Interacts with GRB2, APP, ERI3/PRNPIP and SYN1. Mislocalized cytosolically exposed PrP interacts with MGRN1; this interaction alters MGRN1 subcellular location and causes lysosomal enlargement. Interacts with KIAA1191.

It localises to the cell membrane. Its subcellular location is the golgi apparatus. Its function is as follows. Its primary physiological function is unclear. Has cytoprotective activity against internal or environmental stresses. May play a role in neuronal development and synaptic plasticity. May be required for neuronal myelin sheath maintenance. May play a role in iron uptake and iron homeostasis. Soluble oligomers are toxic to cultured neuroblastoma cells and induce apoptosis (in vitro). Association with GPC1 (via its heparan sulfate chains) targets PRNP to lipid rafts. Also provides Cu(2+) or Zn(2+) for the ascorbate-mediated GPC1 deaminase degradation of its heparan sulfate side chains. The chain is Major prion protein (PRNP) from Macaca sylvanus (Barbary macaque).